Consider the following 86-residue polypeptide: Putative regulatory protein OB1501 (86 aa).

The protein belongs to the RemA family.

This chain is Putative regulatory protein OB1501, found in Oceanobacillus iheyensis (strain DSM 14371 / CIP 107618 / JCM 11309 / KCTC 3954 / HTE831).